We begin with the raw amino-acid sequence, 217 residues long: Protein GrpE (217 aa).

Basic and acidic residues predominate over residues 1–10; that stretch reads MSDHAEHAAD. A disordered region spans residues 1-39; sequence MSDHAEHAADAADTDAPEGDDAGGDDGEQAGDDGTSALS. The span at 12 to 31 shows a compositional bias: acidic residues; sequence ADTDAPEGDDAGGDDGEQAG.

Belongs to the GrpE family. Homodimer.

The protein localises to the cytoplasm. Participates actively in the response to hyperosmotic and heat shock by preventing the aggregation of stress-denatured proteins, in association with DnaK and GrpE. It is the nucleotide exchange factor for DnaK and may function as a thermosensor. Unfolded proteins bind initially to DnaJ; upon interaction with the DnaJ-bound protein, DnaK hydrolyzes its bound ATP, resulting in the formation of a stable complex. GrpE releases ADP from DnaK; ATP binding to DnaK triggers the release of the substrate protein, thus completing the reaction cycle. Several rounds of ATP-dependent interactions between DnaJ, DnaK and GrpE are required for fully efficient folding. In Halobacterium salinarum (strain ATCC 29341 / DSM 671 / R1), this protein is Protein GrpE.